Reading from the N-terminus, the 256-residue chain is Putative transcription factor 001R (256 aa).

In terms of biological role, transcription activation. In Frog virus 3 (isolate Goorha) (FV-3), this protein is Putative transcription factor 001R.